The primary structure comprises 364 residues: Chorismate synthase (364 aa).

Residues arginine 48 and arginine 54 each coordinate NADP(+). Residues arginine 129–serine 131, asparagine 243–alanine 244, glycine 288, lysine 303–serine 307, and arginine 329 contribute to the FMN site.

This sequence belongs to the chorismate synthase family. As to quaternary structure, homotetramer. FMNH2 is required as a cofactor.

The catalysed reaction is 5-O-(1-carboxyvinyl)-3-phosphoshikimate = chorismate + phosphate. It functions in the pathway metabolic intermediate biosynthesis; chorismate biosynthesis; chorismate from D-erythrose 4-phosphate and phosphoenolpyruvate: step 7/7. Catalyzes the anti-1,4-elimination of the C-3 phosphate and the C-6 proR hydrogen from 5-enolpyruvylshikimate-3-phosphate (EPSP) to yield chorismate, which is the branch point compound that serves as the starting substrate for the three terminal pathways of aromatic amino acid biosynthesis. This reaction introduces a second double bond into the aromatic ring system. This chain is Chorismate synthase, found in Chelativorans sp. (strain BNC1).